Here is a 548-residue protein sequence, read N- to C-terminus: Palmitoyltransferase pfa3 (548 aa).

Over 1-32 (MMATLATSPPTSPTWPKRRPRAWALRCERYCC) the chain is Cytoplasmic. Residues 33 to 53 (AAATYFPLAFVYSLTTWAVYV) form a helical membrane-spanning segment. The Extracellular segment spans residues 54–70 (EASIGLKPSRSPWIGLP). Residues 71–91 (TSILGVLLYICLNASYTVAVF) form a helical membrane-spanning segment. Over 92–173 (TDPGSPLTTG…ATCVGLYNYK (82 aa)) the chain is Cytoplasmic. A DHHC domain is found at 130–180 (RYCKKCQCPKPDRAHHCSTCKRCVLKMDHHCPWLATCVGLYNYKAFLLFLI). The chain crosses the membrane as a helical span at residues 174–194 (AFLLFLIYTSLFCWVDFAVSA). The Extracellular segment spans residues 195 to 215 (TWIWTEVFNDAPYLETMLPVN). Residues 216-236 (VVLLAILGGIIGLVLTGFTAW) form a helical membrane-spanning segment. At 237 to 548 (HISLAVRGMT…EDSSEWRDWD (312 aa)) the chain is on the cytoplasmic side. Disordered regions lie at residues 313-339 (RAEEGEERLSPAPEQPASHGVSDDQLT) and 463-548 (NPHQ…RDWD). Positions 508–535 (DPLNQQSVPANGAVNQLQKANEASSATT) are enriched in polar residues. The span at 536–548 (NRREDSSEWRDWD) shows a compositional bias: basic and acidic residues.

The protein belongs to the DHHC palmitoyltransferase family. PFA3 subfamily. Post-translationally, autopalmitoylated.

It localises to the vacuole membrane. It carries out the reaction L-cysteinyl-[protein] + hexadecanoyl-CoA = S-hexadecanoyl-L-cysteinyl-[protein] + CoA. Palmitoyltransferase specific for VAC8. Palmitoylates VAC8 at one or more of its N-terminal cysteine residues, which is required for its proper membrane localization. The sequence is that of Palmitoyltransferase pfa3 (pfa3) from Aspergillus fumigatus (strain ATCC MYA-4609 / CBS 101355 / FGSC A1100 / Af293) (Neosartorya fumigata).